The chain runs to 219 residues: 2-hydroxy-3-keto-5-methylthiopentenyl-1-phosphate phosphatase (219 aa).

The protein belongs to the HAD-like hydrolase superfamily. MtnX family.

It catalyses the reaction 2-hydroxy-5-methylsulfanyl-3-oxopent-1-enyl phosphate + H2O = 1,2-dihydroxy-5-(methylsulfanyl)pent-1-en-3-one + phosphate. It functions in the pathway amino-acid biosynthesis; L-methionine biosynthesis via salvage pathway; L-methionine from S-methyl-5-thio-alpha-D-ribose 1-phosphate: step 4/6. In terms of biological role, dephosphorylates 2-hydroxy-3-keto-5-methylthiopentenyl-1-phosphate (HK-MTPenyl-1-P) yielding 1,2-dihydroxy-3-keto-5-methylthiopentene (DHK-MTPene). In Bacillus cereus (strain ZK / E33L), this protein is 2-hydroxy-3-keto-5-methylthiopentenyl-1-phosphate phosphatase.